The chain runs to 504 residues: Glutamate--tRNA ligase (504 aa).

Residues 9 to 19 (PSPTGDPHVGT) carry the 'HIGH' region motif. The short motif at 248–252 (KISKR) is the 'KMSKS' region element. Lys251 contributes to the ATP binding site.

Belongs to the class-I aminoacyl-tRNA synthetase family. Glutamate--tRNA ligase type 1 subfamily. In terms of assembly, monomer.

The protein resides in the cytoplasm. The catalysed reaction is tRNA(Glu) + L-glutamate + ATP = L-glutamyl-tRNA(Glu) + AMP + diphosphate. Catalyzes the attachment of glutamate to tRNA(Glu) in a two-step reaction: glutamate is first activated by ATP to form Glu-AMP and then transferred to the acceptor end of tRNA(Glu). This Acidothermus cellulolyticus (strain ATCC 43068 / DSM 8971 / 11B) protein is Glutamate--tRNA ligase.